A 245-amino-acid polypeptide reads, in one-letter code: 3-deoxy-manno-octulosonate cytidylyltransferase (245 aa).

It belongs to the KdsB family.

Its subcellular location is the cytoplasm. The enzyme catalyses 3-deoxy-alpha-D-manno-oct-2-ulosonate + CTP = CMP-3-deoxy-beta-D-manno-octulosonate + diphosphate. It functions in the pathway nucleotide-sugar biosynthesis; CMP-3-deoxy-D-manno-octulosonate biosynthesis; CMP-3-deoxy-D-manno-octulosonate from 3-deoxy-D-manno-octulosonate and CTP: step 1/1. It participates in bacterial outer membrane biogenesis; lipopolysaccharide biosynthesis. Functionally, activates KDO (a required 8-carbon sugar) for incorporation into bacterial lipopolysaccharide in Gram-negative bacteria. The protein is 3-deoxy-manno-octulosonate cytidylyltransferase of Elusimicrobium minutum (strain Pei191).